The chain runs to 735 residues: Funoran endo-beta-hydrolase (735 aa).

Positions 1 to 27 (MRVKSVYKKLSVSFILVMLSASQEVNS) are cleaved as a signal peptide. E200 functions as the Proton donor in the catalytic mechanism. E322 acts as the Nucleophile in catalysis.

The protein belongs to the glycosyl hydrolase 86 family.

The enzyme catalyses Endohydrolysis of beta-(1-&gt;4)-linkages between beta-D-galactopyranose-6-sulfate and 3,6-anhydro-alpha-L-galactopyranose units in funoran.. It carries out the reaction Hydrolysis of (1-&gt;4)-beta-D-galactosidic linkages in agarose, giving the tetramer as the predominant product.. Agarase activity is enhanced in the presence of NaCl. Agarase activity is significantly inhibited by Zn(2+) and slightly activated by several divalent ions including Mg(2+), Cd(2+) and Ca(2+). Endohydrolase that cleaves the beta-1,4 glycosidic bond between beta-D-galactopyranose-6-sulfate (G6S) and 3,6-anhydro-alpha-L-galactopyranose (LA) unit of funoran, a polysaccharide produced by red algae of the genus Gloiopeltis. It releases the disaccharide LA-G6S as the predominant end product. Also acts as a random endo-acting beta-agarase, which can hydrolyze agarose tetrasaccharides and hexasaccharides, and produces disaccharides as smallest products. Besides typical agarose oligosaccharides, it can use methylated galactoses. The enzyme exhibits higher catalytic efficiency towards agarose, but binds funoran preferentially. Has no activity on porphyran. The polypeptide is Funoran endo-beta-hydrolase (Wenyingzhuangia aestuarii).